Reading from the N-terminus, the 863-residue chain is DNA-directed RNA polymerase subunit beta' (863 aa).

A disordered region spans residues 1-83; sequence MSGEVAQDQP…SKKKETKASQ (83 aa). A compositionally biased stretch (polar residues) spans 23–36; that stretch reads EIVNSAITVQSSAK. Residues Cys-159, Cys-161, Cys-180, and Cys-183 each coordinate Zn(2+). Residues Asp-621, Asp-623, and Asp-625 each coordinate Mg(2+).

The protein belongs to the RNA polymerase beta' chain family. RpoC1 subfamily. As to quaternary structure, in plastids the minimal PEP RNA polymerase catalytic core is composed of four subunits: alpha, beta, beta', and beta''. When a (nuclear-encoded) sigma factor is associated with the core the holoenzyme is formed, which can initiate transcription. The cofactor is Mg(2+). Requires Zn(2+) as cofactor.

The protein localises to the plastid. It localises to the chloroplast. It catalyses the reaction RNA(n) + a ribonucleoside 5'-triphosphate = RNA(n+1) + diphosphate. DNA-dependent RNA polymerase catalyzes the transcription of DNA into RNA using the four ribonucleoside triphosphates as substrates. The polypeptide is DNA-directed RNA polymerase subunit beta' (Nephroselmis olivacea (Green alga)).